The chain runs to 302 residues: Dihydroorotate dehydrogenase B (NAD(+)), catalytic subunit (302 aa).

Residues Ser-23 and 47-48 (KS) contribute to the FMN site. Substrate contacts are provided by residues Lys-47, 71–75 (NAMGL), and Asn-125. Asn-125 contacts FMN. Catalysis depends on Cys-128, which acts as the Nucleophile. FMN is bound by residues Lys-163 and Ile-189. Residue 190–191 (NT) participates in substrate binding. FMN is bound by residues Gly-215, 241–242 (GG), and 263–264 (GT).

Belongs to the dihydroorotate dehydrogenase family. Type 1 subfamily. Heterotetramer of 2 PyrK and 2 PyrD type B subunits. It depends on FMN as a cofactor.

It is found in the cytoplasm. It carries out the reaction (S)-dihydroorotate + NAD(+) = orotate + NADH + H(+). Its pathway is pyrimidine metabolism; UMP biosynthesis via de novo pathway; orotate from (S)-dihydroorotate (NAD(+) route): step 1/1. In terms of biological role, catalyzes the conversion of dihydroorotate to orotate with NAD(+) as electron acceptor. In Thermococcus kodakarensis (strain ATCC BAA-918 / JCM 12380 / KOD1) (Pyrococcus kodakaraensis (strain KOD1)), this protein is Dihydroorotate dehydrogenase B (NAD(+)), catalytic subunit (pyrD).